Here is a 73-residue protein sequence, read N- to C-terminus: MKVKCLLAVFLIVLIAAEHCQALFFLPSLIGGLISAIKGRRKRELGTQFRPQQKNFMRREIDLERLFAEMPDY.

Residues 1 to 22 (MKVKCLLAVFLIVLIAAEHCQA) form the signal peptide. A Lysine amide modification is found at lysine 38. The propeptide occupies 44 to 73 (ELGTQFRPQQKNFMRREIDLERLFAEMPDY).

It belongs to the non-disulfide-bridged peptide (NDBP) superfamily. Short antimicrobial peptide (group 4) family. As to expression, expressed by the venom gland.

It localises to the secreted. The protein localises to the target cell membrane. Cationic host defense peptide that have antibacterial activity by breaking membranes. Is more effective on Gram-positive than on Gram-negative bacteria. The sequence is that of Antimicrobial peptide 143 from Lychas mucronatus (Chinese swimming scorpion).